The following is a 217-amino-acid chain: Thymidylate kinase (217 aa).

7–14 (GIEGAGKS) contacts ATP.

This sequence belongs to the thymidylate kinase family.

The catalysed reaction is dTMP + ATP = dTDP + ADP. Phosphorylation of dTMP to form dTDP in both de novo and salvage pathways of dTTP synthesis. This is Thymidylate kinase from Desulfovibrio desulfuricans (strain ATCC 27774 / DSM 6949 / MB).